Reading from the N-terminus, the 144-residue chain is uncharacterized protein (144 aa).

An N-terminal signal peptide occupies residues 1 to 23 (MVIPLRNKYGILFLIAVCIMVSG). The disordered stretch occupies residues 119-144 (QNGQRKTMTRIESKTGREEKDEKSKS). Basic and acidic residues predominate over residues 127-144 (TRIESKTGREEKDEKSKS).

This is an uncharacterized protein from Bacillus subtilis (strain 168).